The chain runs to 162 residues: NADH-quinone oxidoreductase subunit I (162 aa).

4Fe-4S ferredoxin-type domains follow at residues 52–82 (LRRYPNGEERCIACKLCEAICPAQAITIEAG) and 93–122 (TRYDIDMVKCIYCGMCQEACPVDAIVEGPN). Residues Cys62, Cys65, Cys68, Cys72, Cys102, Cys105, Cys108, and Cys112 each contribute to the [4Fe-4S] cluster site.

This sequence belongs to the complex I 23 kDa subunit family. In terms of assembly, NDH-1 is composed of 14 different subunits. Subunits NuoA, H, J, K, L, M, N constitute the membrane sector of the complex. [4Fe-4S] cluster is required as a cofactor.

Its subcellular location is the cell inner membrane. The enzyme catalyses a quinone + NADH + 5 H(+)(in) = a quinol + NAD(+) + 4 H(+)(out). NDH-1 shuttles electrons from NADH, via FMN and iron-sulfur (Fe-S) centers, to quinones in the respiratory chain. The immediate electron acceptor for the enzyme in this species is believed to be ubiquinone. Couples the redox reaction to proton translocation (for every two electrons transferred, four hydrogen ions are translocated across the cytoplasmic membrane), and thus conserves the redox energy in a proton gradient. The protein is NADH-quinone oxidoreductase subunit I of Methylorubrum extorquens (strain PA1) (Methylobacterium extorquens).